Consider the following 248-residue polypeptide: Probable transcriptional regulatory protein BT_2363 (248 aa).

Belongs to the TACO1 family.

The protein localises to the cytoplasm. This Bartonella tribocorum (strain CIP 105476 / IBS 506) protein is Probable transcriptional regulatory protein BT_2363.